The following is an 888-amino-acid chain: uncharacterized protein (888 aa).

Positions 1-20 are cleaved as a signal peptide; that stretch reads MKILKSLVLLVLFIVMPAKA. The next 6 helical transmembrane spans lie at 513–533, 565–585, 611–631, 649–669, 682–702, and 781–801; these read IVKAALTLYVIIFGLMFVAGA, TYFFSVFTDGINFFITNVVGA, LLFIELLQIHNGLAFIAIITI, VIAFIGITVMISLAPFFIILM, ISTLLSYVVQPTILLIFFLLI, and LLFYSYCLMSYGLVTFVNIVV.

Belongs to the TrbL/VirB6 family.

The protein resides in the cell membrane. This is an uncharacterized protein from Rickettsia prowazekii (strain Madrid E).